The chain runs to 787 residues: ER degradation-enhancing alpha-mannosidase-like protein 1 (787 aa).

The N-terminal stretch at 1-22 (MGSLHSIFCVCLILLCIFKENS) is a signal peptide. Residues Asn-479, Asn-609, Asn-670, Asn-693, and Asn-756 are each glycosylated (N-linked (GlcNAc...) asparagine).

It belongs to the glycosyl hydrolase 47 family.

It localises to the endoplasmic reticulum lumen. Its function is as follows. Alpha-mannosidase-like protein involved in endoplasmic reticulum-associated degradation (ERAD). Delivers misfolded glycoproteins to proteasomes. It lacks mannosidase activity. This Schizosaccharomyces pombe (strain 972 / ATCC 24843) (Fission yeast) protein is ER degradation-enhancing alpha-mannosidase-like protein 1 (mnl1).